The primary structure comprises 187 residues: Elongation factor P (187 aa).

The protein belongs to the elongation factor P family.

It localises to the cytoplasm. Its pathway is protein biosynthesis; polypeptide chain elongation. Functionally, involved in peptide bond synthesis. Stimulates efficient translation and peptide-bond synthesis on native or reconstituted 70S ribosomes in vitro. Probably functions indirectly by altering the affinity of the ribosome for aminoacyl-tRNA, thus increasing their reactivity as acceptors for peptidyl transferase. This is Elongation factor P from Desulforapulum autotrophicum (strain ATCC 43914 / DSM 3382 / VKM B-1955 / HRM2) (Desulfobacterium autotrophicum).